Reading from the N-terminus, the 1526-residue chain is Myosin type-2 heavy chain 1 (1526 aa).

In terms of domain architecture, Myosin N-terminal SH3-like spans 22-73 (DDKRWVWISDPETAFTKAWIKEDLPDKKYVVRYNNSRDEKIVGEDEIDPVNP). Residues 77–755 (DRVNDMAELT…VLAELEERRV (679 aa)) enclose the Myosin motor domain. 170-177 (GESGAGKT) serves as a coordination point for ATP. Actin-binding regions lie at residues 634 to 656 (LNQL…VPNE) and 734 to 748 (RIGV…GVLA). An IQ domain is found at 758–787 (LQRLMTMLQTRIRGFLQRKIFQKRLKDIQA). Residues 875–1244 (ALDKEEILRR…SLTKQVNELS (370 aa)) adopt a coiled-coil conformation. S1044 is subject to Phosphoserine.

The protein belongs to the TRAFAC class myosin-kinesin ATPase superfamily. Myosin family. Binds to cdc4 and rlc1.

Its function is as follows. Required for cell division. It is a component of the cdc12 'spot', a structure thought to mark the site of septation. May work in conjunction with myo3. This is Myosin type-2 heavy chain 1 (myo2) from Schizosaccharomyces pombe (strain 972 / ATCC 24843) (Fission yeast).